Reading from the N-terminus, the 190-residue chain is Peptidyl-tRNA hydrolase (190 aa).

Y18 contacts tRNA. H23 (proton acceptor) is an active-site residue. TRNA contacts are provided by F69, N71, and N117.

It belongs to the PTH family. In terms of assembly, monomer.

The protein localises to the cytoplasm. It catalyses the reaction an N-acyl-L-alpha-aminoacyl-tRNA + H2O = an N-acyl-L-amino acid + a tRNA + H(+). In terms of biological role, hydrolyzes ribosome-free peptidyl-tRNAs (with 1 or more amino acids incorporated), which drop off the ribosome during protein synthesis, or as a result of ribosome stalling. Catalyzes the release of premature peptidyl moieties from peptidyl-tRNA molecules trapped in stalled 50S ribosomal subunits, and thus maintains levels of free tRNAs and 50S ribosomes. This Rhodococcus jostii (strain RHA1) protein is Peptidyl-tRNA hydrolase.